Consider the following 787-residue polypeptide: Pyridoxal-dependent decarboxylase domain-containing protein 1 (787 aa).

The span at 26–44 shows a compositional bias: basic and acidic residues; the sequence is MLEKSPRRTEEENGKKPVS. A disordered region spans residues 26–52; sequence MLEKSPRRTEEENGKKPVSEDIPGPLQ. At serine 652 the chain carries Phosphoserine. A disordered region spans residues 682-787; sequence QGTGVTPPPT…SQVEELERLR (106 aa). Residues threonine 687 and threonine 691 each carry the phosphothreonine modification. A phosphoserine mark is found at serine 710, serine 718, serine 722, and serine 748. Basic and acidic residues predominate over residues 725–748; it reads HIEDLEKVEQLSSGLEHDNLEAHS. Positions 759–771 are enriched in polar residues; it reads TARQTEALQNQAQ. Basic and acidic residues predominate over residues 772-787; that stretch reads HQEDDHSQVEELERLR. Phosphoserine is present on serine 778.

This sequence belongs to the group II decarboxylase family. The cofactor is pyridoxal 5'-phosphate.

The sequence is that of Pyridoxal-dependent decarboxylase domain-containing protein 1 (Pdxdc1) from Mus musculus (Mouse).